Reading from the N-terminus, the 113-residue chain is Large ribosomal subunit protein bL19 (113 aa).

This sequence belongs to the bacterial ribosomal protein bL19 family.

In terms of biological role, this protein is located at the 30S-50S ribosomal subunit interface and may play a role in the structure and function of the aminoacyl-tRNA binding site. This chain is Large ribosomal subunit protein bL19, found in Rhodococcus jostii (strain RHA1).